Here is a 258-residue protein sequence, read N- to C-terminus: UPF0246 protein Pnap_3166 (258 aa).

Belongs to the UPF0246 family.

The sequence is that of UPF0246 protein Pnap_3166 from Polaromonas naphthalenivorans (strain CJ2).